Reading from the N-terminus, the 78-residue chain is UPF0349 protein RBAM_029300 (78 aa).

Belongs to the UPF0349 family.

This chain is UPF0349 protein RBAM_029300, found in Bacillus velezensis (strain DSM 23117 / BGSC 10A6 / LMG 26770 / FZB42) (Bacillus amyloliquefaciens subsp. plantarum).